The sequence spans 102 residues: Matrix Gla protein (102 aa).

Residues serine 2, serine 3, and serine 5 each carry the phosphoserine modification. The interval 18–45 (DANSFMRQPRPPNHWDSRDRFKSPRERT) is disordered. The Gla domain occupies 27–73 (RPPNHWDSRDRFKSPRERTREKCEEYRPCERLARQVGLKRAYGKYFG). Positions 30–45 (NHWDSRDRFKSPRERT) are enriched in basic and acidic residues. 4-carboxyglutamate occurs at positions 43, 47, 50, and 51. Cysteine 49 and cysteine 55 are disulfide-bonded. A disordered region spans residues 72–102 (FGNRRQRPSTSGRLRPRKYRASRYRNHHYRY). Residues 85–102 (LRPRKYRASRYRNHHYRY) show a composition bias toward basic residues.

It belongs to the osteocalcin/matrix Gla protein family. In terms of processing, requires vitamin K-dependent gamma-carboxylation for its function. As to expression, accounts for 35-40% of the total protein in the acid demineralization extract of calcified cartilage.

Its subcellular location is the secreted. Functionally, associates with the organic matrix of calcified cartilage. This Galeorhinus galeus (Tope shark) protein is Matrix Gla protein (mgp).